Consider the following 369-residue polypeptide: Peptide chain release factor 2 (369 aa).

Gln-247 bears the N5-methylglutamine mark.

This sequence belongs to the prokaryotic/mitochondrial release factor family. Methylated by PrmC. Methylation increases the termination efficiency of RF2.

Its subcellular location is the cytoplasm. Its function is as follows. Peptide chain release factor 2 directs the termination of translation in response to the peptide chain termination codons UGA and UAA. In Phenylobacterium zucineum (strain HLK1), this protein is Peptide chain release factor 2.